A 387-amino-acid chain; its full sequence is Oxidase FUB9 (387 aa).

The segment at Met-1–Lys-20 is disordered. Residues Ser-18–Ala-379 enclose the FMN hydroxy acid dehydrogenase domain. Position 44 (Tyr-44) interacts with a 2-oxocarboxylate. FMN-binding residues include Ser-126, Gln-150, and Thr-178. Arg-187 is a binding site for a 2-oxocarboxylate. Lys-250 provides a ligand contact to FMN. Residue His-274 is the Proton acceptor of the active site. Residue Arg-277 coordinates a 2-oxocarboxylate. Residues Asp-305–Arg-309 and Gly-328–Arg-329 contribute to the FMN site.

This sequence belongs to the FMN-dependent alpha-hydroxy acid dehydrogenase family. FMN serves as cofactor.

It participates in mycotoxin biosynthesis. Its function is as follows. Oxidase; part of the gene cluster that mediates the biosynthesis of fusaric acid, a mycotoxin with low to moderate toxicity to animals and humans, but with high phytotoxic properties. L-aspartate is suggested as fusaric acid amino acid precursor that is activated and further processed to O-acetyl-L-homoserine by cluster enzymes aspartate kinase FUB3 and homoserine O-acetyltransferase FUB5, as well as enzymes of the primary metabolism. The polyketide synthase (PKS) FUB1 generates the triketide trans-2-hexenal which is presumptively released by the hydrolase FUB4 and linked to the NRPS-bound amino acid precursor by NAD(P)-dependent dehydrogenase FUB6. FUB1, FUB4, and the non-canonical NRPS Fub8 may form an enzyme complex. Further processing of the NRPS-bound intermediate might be carried out by FUB6 and the sulfhydrylase FUB7, enabling a spontaneous electrocyclization to close the carbon backbone of fusaric acid. Dihydrofusaric acid is likely to be released via reduction by the thioester reductase (TR) domain of FUB8 whereupon the final oxidation to fusaric acid may (also) be performed by the FMN-dependent dehydrogenase FUB9. The sequence is that of Oxidase FUB9 from Gibberella moniliformis (strain M3125 / FGSC 7600) (Maize ear and stalk rot fungus).